The chain runs to 402 residues: 26S proteasome non-ATPase regulatory subunit 4 homolog (402 aa).

The 185-residue stretch at 5–189 (ATMICIDNSE…LSDVLISTPI (185 aa)) folds into the VWFA domain. A UIM 1 domain is found at 221-240 (NVDPELALALRLSMEEERAR). Residues 241-261 (QEAIAKKAAEESSGAENKDHA) show a composition bias toward basic and acidic residues. Disordered regions lie at residues 241 to 292 (QEAI…EDDD) and 302 to 321 (MSME…MAEA). 2 UIM domains span residues 291–310 (DDAQ…GSSG) and 323–342 (VDDQ…AGGS). A disordered region spans residues 363-402 (SLPGVDPNDPSVKDLLASLHGQGEQEKKEDKSDKPEDEKK). Basic and acidic residues predominate over residues 385-402 (GEQEKKEDKSDKPEDEKK).

The protein belongs to the proteasome subunit S5A family. As to quaternary structure, component of the 19S regulatory particle (RP/PA700) base subcomplex of the 26S proteasome. The 26S proteasome is composed of a core protease (CP), known as the 20S proteasome, capped at one or both ends by the 19S regulatory particle (RP/PA700). The RP/PA700 complex is composed of at least 17 different subunits in two subcomplexes, the base and the lid, which form the portions proximal and distal to the 20S proteolytic core, respectively. Interacts with PI4KG4.

Functionally, plays a role in maintaining the structural integrity of the 19S regulatory particle (RP), subcomplex of the 26S proteasome. Plays a major role in both the direct and indirect recognition of ubiquitinated substrates of ubiquitin/26S proteasome-mediated proteolysis (UPP). Binds and presumably selects ubiquitin-conjugates for destruction. The polypeptide is 26S proteasome non-ATPase regulatory subunit 4 homolog (Oryza sativa subsp. japonica (Rice)).